Reading from the N-terminus, the 136-residue chain is Phospholipase A2 (136 aa).

Ca(2+) contacts are provided by Trp8, Gly10, and Gly12. Disulfide bonds link Cys9–Cys31, Cys30–Cys70, Cys37–Cys63, Cys61–Cys95, and Cys105–Cys115. N-linked (GlcNAc...) asparagine glycosylation is present at Asn16. His34 is an active-site residue. Ca(2+) is bound at residue Asp35. Asp64 is a catalytic residue.

Belongs to the phospholipase A2 family. Requires Ca(2+) as cofactor. Expressed by the venom gland.

The protein localises to the secreted. It catalyses the reaction a 1,2-diacyl-sn-glycero-3-phosphocholine + H2O = a 1-acyl-sn-glycero-3-phosphocholine + a fatty acid + H(+). Its function is as follows. PLA2 catalyzes the calcium-dependent hydrolysis of the 2-acyl groups in 3-sn-phosphoglycerides. The polypeptide is Phospholipase A2 (Bombus pensylvanicus (American bumblebee)).